The chain runs to 409 residues: Translation initiation factor 2 subunit gamma (409 aa).

Residues 6-203 (QPEVNIGLVG…AVQSEIPTPE (198 aa)) enclose the tr-type G domain. The tract at residues 15–22 (GHVDHGKT) is G1. Asp18, Thr22, Gly43, and Ser45 together coordinate Mg(2+). 18 to 23 (DHGKTT) is a GTP binding site. The segment at 43–47 (GISIR) is G2. Positions 90-93 (DAPG) are G3. GTP-binding positions include 146–149 (NKVD) and 181–183 (SAG). Residues 146 to 149 (NKVD) are G4. The G5 stretch occupies residues 181-183 (SAG).

This sequence belongs to the TRAFAC class translation factor GTPase superfamily. Classic translation factor GTPase family. EIF2G subfamily. In terms of assembly, heterotrimer composed of an alpha, a beta and a gamma chain. The cofactor is Mg(2+).

It catalyses the reaction GTP + H2O = GDP + phosphate + H(+). Its function is as follows. eIF-2 functions in the early steps of protein synthesis by forming a ternary complex with GTP and initiator tRNA. The polypeptide is Translation initiation factor 2 subunit gamma (Haloarcula marismortui (strain ATCC 43049 / DSM 3752 / JCM 8966 / VKM B-1809) (Halobacterium marismortui)).